A 510-amino-acid chain; its full sequence is Inositol-3-phosphate synthase (510 aa).

Residues G70, G71, N72, N73, D143, I180, Q190, R193, T230, A231, N232, T233, G281, S282, D306, S309, N340, N341, D342, K355, G393, D394, D422, and S423 each contribute to the NAD(+) site.

This sequence belongs to the myo-inositol 1-phosphate synthase family. It depends on NAD(+) as a cofactor.

Its subcellular location is the cytoplasm. It localises to the cytosol. It is found in the nucleus. It catalyses the reaction D-glucose 6-phosphate = 1D-myo-inositol 3-phosphate. The protein operates within polyol metabolism; myo-inositol biosynthesis; myo-inositol from D-glucose 6-phosphate: step 1/2. Its function is as follows. Key enzyme in myo-inositol biosynthesis pathway that catalyzes the conversion of glucose 6-phosphate to 1-myo-inositol 1-phosphate in a NAD-dependent manner. In Zea mays (Maize), this protein is Inositol-3-phosphate synthase.